The following is a 636-amino-acid chain: Biosynthetic arginine decarboxylase (636 aa).

At Lys-110 the chain carries N6-(pyridoxal phosphate)lysine. Position 290 to 300 (290 to 300) interacts with substrate; that stretch reads IDVGGGLGVDY.

Belongs to the Orn/Lys/Arg decarboxylase class-II family. SpeA subfamily. Requires Mg(2+) as cofactor. It depends on pyridoxal 5'-phosphate as a cofactor.

The enzyme catalyses L-arginine + H(+) = agmatine + CO2. Its function is as follows. Catalyzes the biosynthesis of agmatine from arginine. The sequence is that of Biosynthetic arginine decarboxylase from Pseudomonas aeruginosa (strain ATCC 15692 / DSM 22644 / CIP 104116 / JCM 14847 / LMG 12228 / 1C / PRS 101 / PAO1).